Reading from the N-terminus, the 286-residue chain is Translocon-associated protein subunit alpha (286 aa).

Residues 1–21 (MRLLPRLLLLFLLAFPAAVLL) form the signal peptide. At 22-207 (RGGPGGSLAL…EREDGLDGET (186 aa)) the chain is on the lumenal side. The span at 46–75 (IIEDEDDEAEVEEDEPTDLAEDKEEEDVSS) shows a compositional bias: acidic residues. The tract at residues 46–83 (IIEDEDDEAEVEEDEPTDLAEDKEEEDVSSEPEASPSA) is disordered. Asn136 and Asn191 each carry an N-linked (GlcNAc...) asparagine glycan. The helical transmembrane segment at 208 to 228 (IFMYMFLAGLGLLVVVGLHQL) threads the bilayer. Residues 229 to 286 (LESRKRKRPIQKVEMGTSSQNDVDMSWIPQETLNQINKASPRRQPRKRAQKRSVGSDE) are Cytoplasmic-facing. The interval 236–286 (RPIQKVEMGTSSQNDVDMSWIPQETLNQINKASPRRQPRKRAQKRSVGSDE) is disordered. The span at 244–266 (GTSSQNDVDMSWIPQETLNQINK) shows a compositional bias: polar residues. Ser247 carries the post-translational modification Phosphoserine. Thr260 is modified (phosphothreonine). Ser268 carries the post-translational modification Phosphoserine. The segment covering 268–279 (SPRRQPRKRAQK) has biased composition (basic residues).

Belongs to the TRAP-alpha family. Heterotetramer of TRAP-alpha, TRAP-beta, TRAP-delta and TRAP-gamma. Interacts with palmitoylated calnexin (CALX), the interaction is required for efficient folding of glycosylated proteins.

The protein resides in the endoplasmic reticulum membrane. TRAP proteins are part of a complex whose function is to bind calcium to the ER membrane and thereby regulate the retention of ER resident proteins. May be involved in the recycling of the translocation apparatus after completion of the translocation process or may function as a membrane-bound chaperone facilitating folding of translocated proteins. This is Translocon-associated protein subunit alpha (Ssr1) from Mus musculus (Mouse).